The following is a 286-amino-acid chain: NADP-dependent dehydrogenase clz5 (286 aa).

NADP(+)-binding residues include Ser-49, Leu-51, Asp-93, Tyr-207, Lys-211, Ile-241, and Gln-245. Residue Tyr-207 is the Proton acceptor of the active site. The Proton donor role is filled by Tyr-207. Lys-211 acts as the Lowers pKa of active site Tyr in catalysis.

Belongs to the short-chain dehydrogenases/reductases (SDR) family. As to quaternary structure, homodimer.

It is found in the cytoplasm. It localises to the cytosol. Its pathway is secondary metabolite biosynthesis. In terms of biological role, NADP-dependent dehydrogenase; part of the gene cluster that mediates the biosynthesis of squalestatin S1 (SQS1, also known as zaragozic acid A), a heavily oxidized fungal polyketide that offers potent cholesterol lowering activity by targeting squalene synthase (SS). SQS1 is composed of a 2,8-dioxobicyclic[3.2.1]octane-3,4,5-tricarboxyclic acid core that is connected to two lipophilic polyketide arms. These initial steps feature the priming of an unusual benzoic acid starter unit onto the highly reducing polyketide synthase clz14, followed by oxaloacetate extension and product release to generate a tricarboxylic acid containing product. The phenylalanine ammonia lyase (PAL) clz10 and the acyl-CoA ligase clz12 are involved in transforming phenylalanine into benzoyl-CoA. The citrate synthase-like protein clz17 is involved in connecting the C-alpha-carbons of the hexaketide chain and oxaloacetate to afford the tricarboxylic acid unit. The potential hydrolytic enzymes, clz11 and clz13, are in close proximity to pks2 and may participate in product release. On the other side, the tetraketide arm is synthesized by a the squalestatin tetraketide synthase clz2 and enzymatically esterified to the core in the last biosynthetic step, by the acetyltransferase clz6. The biosynthesis of the tetraketide must involve 3 rounds of chain extension. After the first and second rounds methyl-transfer occurs, and in all rounds of extension the ketoreductase and dehydratase are active. The enoyl reductase and C-MeT of clz2 are not active in the final round of extension. The acetyltransferase clz6 appears to have a broad substrate selectivity for its acyl CoA substrate, allowing the in vitro synthesis of novel squalestatins. The biosynthesis of SQS1 requires several oxidative steps likely performed by oxidoreductases clz3, clz15 and clz16. Finally, in support of the identification of the cluster as being responsible for SQS1 production, the cluster contains a gene encoding a putative squalene synthase (SS) clz20, suggesting a likely mechanism for self-resistance. The polypeptide is NADP-dependent dehydrogenase clz5 (Cochliobolus lunatus (Filamentous fungus)).